The following is a 463-amino-acid chain: Glutamate-1-semialdehyde 2,1-aminomutase, chloroplastic (463 aa).

The transit peptide at 1–30 (MQMQLNAKTVQGAFKAQRPRSVRGNVAVRA) directs the protein to the chloroplast. Lys-303 carries the post-translational modification N6-(pyridoxal phosphate)lysine.

Belongs to the class-III pyridoxal-phosphate-dependent aminotransferase family. HemL subfamily. Homodimer. Pyridoxal 5'-phosphate is required as a cofactor.

Its subcellular location is the plastid. It localises to the chloroplast. The enzyme catalyses (S)-4-amino-5-oxopentanoate = 5-aminolevulinate. The protein operates within porphyrin-containing compound metabolism; protoporphyrin-IX biosynthesis; 5-aminolevulinate from L-glutamyl-tRNA(Glu): step 2/2. Its pathway is porphyrin-containing compound metabolism; chlorophyll biosynthesis. This Chlamydomonas reinhardtii (Chlamydomonas smithii) protein is Glutamate-1-semialdehyde 2,1-aminomutase, chloroplastic (GSA).